The primary structure comprises 194 residues: Imidazoleglycerol-phosphate dehydratase (194 aa).

This sequence belongs to the imidazoleglycerol-phosphate dehydratase family.

The protein localises to the cytoplasm. It catalyses the reaction D-erythro-1-(imidazol-4-yl)glycerol 3-phosphate = 3-(imidazol-4-yl)-2-oxopropyl phosphate + H2O. Its pathway is amino-acid biosynthesis; L-histidine biosynthesis; L-histidine from 5-phospho-alpha-D-ribose 1-diphosphate: step 6/9. This Streptococcus mutans serotype c (strain ATCC 700610 / UA159) protein is Imidazoleglycerol-phosphate dehydratase.